Consider the following 125-residue polypeptide: Interferon-induced transmembrane protein 1 (125 aa).

Over methionine 1–histidine 36 the chain is Cytoplasmic. Residue serine 16 is modified to Phosphoserine. Residues valine 37–phenylalanine 57 constitute an intramembrane region (helical). S-palmitoyl cysteine attachment occurs at residues cysteine 50, cysteine 51, and cysteine 84. Residues alanine 58–asparagine 86 lie on the Cytoplasmic side of the membrane. The interaction with CAV1 stretch occupies residues cysteine 84–tyrosine 125. Residues isoleucine 87–glycine 107 traverse the membrane as a helical segment. The Extracellular segment spans residues serine 108–tyrosine 125.

Belongs to the CD225/Dispanin family. Interacts with CD81. Part of a complex composed of CD19, CR2/CD21, CD81 and IFITM1/CD225 in the membrane of mature B-cells. Interacts with CAV1; this interaction enhances the ability of CAV1 in inhibiting ERK activation. Palmitoylation on membrane-proximal cysteines controls clustering in membrane compartments and antiviral activity. In terms of tissue distribution, bone (at protein level). Levels greatly elevated in colon cancer, cervical cancer, esophageal cancer and ovarian cancer. Expressed in glioma cell lines.

It localises to the cell membrane. It is found in the lysosome membrane. Functionally, IFN-induced antiviral protein which inhibits the entry of viruses to the host cell cytoplasm, permitting endocytosis, but preventing subsequent viral fusion and release of viral contents into the cytosol. Active against multiple viruses, including influenza A virus, SARS coronaviruses (SARS-CoV and SARS-CoV-2), Marburg virus (MARV), Ebola virus (EBOV), Dengue virus (DNV), West Nile virus (WNV), human immunodeficiency virus type 1 (HIV-1) and hepatitis C virus (HCV). Can inhibit: influenza virus hemagglutinin protein-mediated viral entry, MARV and EBOV GP1,2-mediated viral entry and SARS-CoV and SARS-CoV-2 S protein-mediated viral entry. Also implicated in cell adhesion and control of cell growth and migration. Inhibits SARS-CoV-2 S protein-mediated syncytia formation. Plays a key role in the antiproliferative action of IFN-gamma either by inhibiting the ERK activation or by arresting cell growth in G1 phase in a p53-dependent manner. Acts as a positive regulator of osteoblast differentiation. In hepatocytes, IFITM proteins act in a coordinated manner to restrict HCV infection by targeting the endocytosed HCV virion for lysosomal degradation. IFITM2 and IFITM3 display anti-HCV activity that may complement the anti-HCV activity of IFITM1 by inhibiting the late stages of HCV entry, possibly in a coordinated manner by trapping the virion in the endosomal pathway and targeting it for degradation at the lysosome. The protein is Interferon-induced transmembrane protein 1 of Homo sapiens (Human).